The chain runs to 222 residues: Ribonuclease S-3 (222 aa).

The N-terminal stretch at 1-22 is a signal peptide; it reads MFRLQLISAFFILLFSLSPVSA. A disulfide bridge links C38 with C44. An N-linked (GlcNAc...) asparagine glycan is attached at N50. Residue H54 is the Proton donor of the active site. RNA is bound by residues H54, 92–93, 109–110, and 113–114; these read QM, HE, and RH. 3 cysteine pairs are disulfide-bonded: C68–C117, C177–C210, and C193–C204. The active site involves E110. H114 functions as the Proton acceptor in the catalytic mechanism.

The protein belongs to the RNase T2 family.

Its subcellular location is the secreted. The protein localises to the extracellular space. The catalysed reaction is a ribonucleotidyl-ribonucleotide-RNA + H2O = a 3'-end 3'-phospho-ribonucleotide-RNA + a 5'-end dephospho-ribonucleoside-RNA + H(+). Its function is as follows. Self-incompatibility (SI) is the inherited ability of a flowering plant to prevent self-fertilization by discriminating between self and non-self pollen during pollination. In many species, self-incompatibility is controlled by the single, multiallelic locus S. This is Ribonuclease S-3 (S3) from Petunia hybrida (Petunia).